A 478-amino-acid chain; its full sequence is JmjC domain-containing histone demethylation protein 1 (478 aa).

The PHD-type zinc finger occupies Val6–His70. One can recognise a JmjC domain in the interval Ser242–His401. Thr294 contacts substrate. His297 and Asp299 together coordinate Fe cation. Residue Lys314 coordinates substrate. His369 is a Fe cation binding site.

The protein belongs to the JHDM1 histone demethylase family. Fe(2+) serves as cofactor.

It is found in the nucleus. It catalyses the reaction N(6),N(6)-dimethyl-L-lysyl(36)-[histone H3] + 2 2-oxoglutarate + 2 O2 = L-lysyl(36)-[histone H3] + 2 formaldehyde + 2 succinate + 2 CO2. In terms of biological role, histone demethylase that specifically demethylates 'Lys-36' of histone H3, thereby playing a central role in histone code. The protein is JmjC domain-containing histone demethylation protein 1 (JHD1) of Kluyveromyces lactis (strain ATCC 8585 / CBS 2359 / DSM 70799 / NBRC 1267 / NRRL Y-1140 / WM37) (Yeast).